The following is a 98-amino-acid chain: Large ribosomal subunit protein uL23 (98 aa).

This sequence belongs to the universal ribosomal protein uL23 family. Part of the 50S ribosomal subunit. Contacts protein L29, and trigger factor when it is bound to the ribosome.

One of the early assembly proteins it binds 23S rRNA. One of the proteins that surrounds the polypeptide exit tunnel on the outside of the ribosome. Forms the main docking site for trigger factor binding to the ribosome. The protein is Large ribosomal subunit protein uL23 of Limosilactobacillus reuteri (strain DSM 20016) (Lactobacillus reuteri).